The primary structure comprises 146 residues: 3-dehydroquinate dehydratase (146 aa).

Tyr23 serves as the catalytic Proton acceptor. Substrate is bound by residues Asn75, His81, and Asp88. The active-site Proton donor is the His101. Residues 102–103 (LS) and Arg112 contribute to the substrate site.

It belongs to the type-II 3-dehydroquinase family. Homododecamer.

It catalyses the reaction 3-dehydroquinate = 3-dehydroshikimate + H2O. The protein operates within metabolic intermediate biosynthesis; chorismate biosynthesis; chorismate from D-erythrose 4-phosphate and phosphoenolpyruvate: step 3/7. Its function is as follows. Catalyzes a trans-dehydration via an enolate intermediate. The sequence is that of 3-dehydroquinate dehydratase from Saccharophagus degradans (strain 2-40 / ATCC 43961 / DSM 17024).